The chain runs to 640 residues: Chaperone protein DnaK (640 aa).

Threonine 199 carries the post-translational modification Phosphothreonine; by autocatalysis. The disordered stretch occupies residues 603-640; that stretch reads YTQQAEEPQPQKEEGKAAEEDVVDAEFEEVKEDKNKAS. Residues 611-621 show a composition bias toward basic and acidic residues; that stretch reads QPQKEEGKAAE. Over residues 622 to 632 the composition is skewed to acidic residues; it reads EDVVDAEFEEV.

Belongs to the heat shock protein 70 family.

Its function is as follows. Acts as a chaperone. The protein is Chaperone protein DnaK of Nitrosococcus oceani (strain ATCC 19707 / BCRC 17464 / JCM 30415 / NCIMB 11848 / C-107).